Consider the following 284-residue polypeptide: Lipoyl synthase (284 aa).

Positions 34, 39, 45, 60, 64, 67, and 272 each coordinate [4Fe-4S] cluster. Residues 46 to 261 (FARRTATFMI…EEIGYKLGFK (216 aa)) enclose the Radical SAM core domain.

It belongs to the radical SAM superfamily. Lipoyl synthase family. It depends on [4Fe-4S] cluster as a cofactor.

It localises to the cytoplasm. It carries out the reaction [[Fe-S] cluster scaffold protein carrying a second [4Fe-4S](2+) cluster] + N(6)-octanoyl-L-lysyl-[protein] + 2 oxidized [2Fe-2S]-[ferredoxin] + 2 S-adenosyl-L-methionine + 4 H(+) = [[Fe-S] cluster scaffold protein] + N(6)-[(R)-dihydrolipoyl]-L-lysyl-[protein] + 4 Fe(3+) + 2 hydrogen sulfide + 2 5'-deoxyadenosine + 2 L-methionine + 2 reduced [2Fe-2S]-[ferredoxin]. The protein operates within protein modification; protein lipoylation via endogenous pathway; protein N(6)-(lipoyl)lysine from octanoyl-[acyl-carrier-protein]: step 2/2. Its function is as follows. Catalyzes the radical-mediated insertion of two sulfur atoms into the C-6 and C-8 positions of the octanoyl moiety bound to the lipoyl domains of lipoate-dependent enzymes, thereby converting the octanoylated domains into lipoylated derivatives. The polypeptide is Lipoyl synthase (Caldanaerobacter subterraneus subsp. tengcongensis (strain DSM 15242 / JCM 11007 / NBRC 100824 / MB4) (Thermoanaerobacter tengcongensis)).